The following is a 145-amino-acid chain: 3-hydroxyacyl-[acyl-carrier-protein] dehydratase FabZ (145 aa).

H49 is a catalytic residue.

This sequence belongs to the thioester dehydratase family. FabZ subfamily.

It is found in the cytoplasm. The catalysed reaction is a (3R)-hydroxyacyl-[ACP] = a (2E)-enoyl-[ACP] + H2O. In terms of biological role, involved in unsaturated fatty acids biosynthesis. Catalyzes the dehydration of short chain beta-hydroxyacyl-ACPs and long chain saturated and unsaturated beta-hydroxyacyl-ACPs. The protein is 3-hydroxyacyl-[acyl-carrier-protein] dehydratase FabZ of Rickettsia africae (strain ESF-5).